A 291-amino-acid chain; its full sequence is Orotidine 5'-phosphate decarboxylase (291 aa).

The active-site Proton donor is the Lys97.

This sequence belongs to the OMP decarboxylase family. Type 2 subfamily.

The catalysed reaction is orotidine 5'-phosphate + H(+) = UMP + CO2. The protein operates within pyrimidine metabolism; UMP biosynthesis via de novo pathway; UMP from orotate: step 2/2. The protein is Orotidine 5'-phosphate decarboxylase of Clostridium kluyveri (strain ATCC 8527 / DSM 555 / NBRC 12016 / NCIMB 10680 / K1).